The primary structure comprises 373 residues: L-threonine 3-dehydrogenase, mitochondrial (373 aa).

NAD(+) is bound by residues 62-67 (GGLGQL), 88-90 (DIR), 106-107 (NI), tyrosine 195, lysine 199, and isoleucine 225. Tyrosine 195 acts as the Proton donor/acceptor in catalysis.

It belongs to the NAD(P)-dependent epimerase/dehydratase family. Homodimer.

It is found in the mitochondrion. It catalyses the reaction L-threonine + NAD(+) = (2S)-2-amino-3-oxobutanoate + NADH + H(+). Its pathway is amino-acid degradation; L-threonine degradation via oxydo-reductase pathway; glycine from L-threonine: step 1/2. Catalyzes the NAD(+)-dependent oxidation of L-threonine to 2-amino-3-ketobutyrate, mediating L-threonine catabolism. The chain is L-threonine 3-dehydrogenase, mitochondrial from Mus musculus (Mouse).